The chain runs to 347 residues: Isocitrate dehydrogenase [NAD] subunit alpha, mitochondrial (347 aa).

Residues 1–8 (QKQVTRGF) constitute a mitochondrion transit peptide. Position 14–42 (14–42 (TVTLIPGDGIGPEISAAVMKIFDAAKAPI)) interacts with NAD(+). K58 is subject to N6-succinyllysine. Phosphothreonine is present on T82. Substrate-binding residues include R96, R106, and R127. Position 204 is an N6-acetyllysine (K204). Residues D214, D238, and D242 each contribute to the Mg(2+) site. K324 carries the post-translational modification N6-acetyllysine; alternate. Residue K324 is modified to N6-succinyllysine; alternate. K331 is modified (N6-succinyllysine).

The protein belongs to the isocitrate and isopropylmalate dehydrogenases family. In terms of assembly, heterooligomer of subunits alpha (IDH3A), beta (IDH3B), and gamma (IDH3G) in the apparent ratio of 2:1:1. The heterodimer containing one IDH3A and one IDH3B subunit and the heterodimer containing one IDH3A and one IDH3G subunit assemble into a heterotetramer (which contains two subunits of IDH3A, one of IDH3B and one of IDH3G) and further into the heterooctamer. The cofactor is Mg(2+). Mn(2+) is required as a cofactor.

The protein localises to the mitochondrion. The catalysed reaction is D-threo-isocitrate + NAD(+) = 2-oxoglutarate + CO2 + NADH. Its activity is regulated as follows. The heterotetramer and the heterodimer composed of IDH3A and IDH3G subunits can be allosterically activated by citrate (CIT) or/and ADP, and the two activators can act independently or synergistically. The heterodimer composed of IDH3A and IDH3B subunits cannot be allosterically regulated and the allosteric regulation of the heterotetramer is through the IDH3G subunit and not the IDH3B subunit. The IDH3G subunit contains the allosteric site which consists of a CIT-binding site and an ADP-binding site, and the binding of CIT and ADP causes conformational changes at the allosteric site which are transmitted to the active site in the catalytic subunit (IDH3A) through a cascade of conformational changes at the heterodimer interface, leading to stabilization of the isocitrate-binding at the active site and thus activation of the enzyme. ATP can activate the heterotetramer and the heterodimer composed of IDH3A and IDH3G subunits at low concentrations but inhibits their activities at high concentrations, whereas ATP exhibits only inhibitory effect on the heterodimer composed of IDH3A and IDH3B subunits. Its function is as follows. Catalytic subunit of the enzyme which catalyzes the decarboxylation of isocitrate (ICT) into alpha-ketoglutarate. The heterodimer composed of the alpha (IDH3A) and beta (IDH3B) subunits and the heterodimer composed of the alpha (IDH3A) and gamma (IDH3G) subunits, have considerable basal activity but the full activity of the heterotetramer (containing two subunits of IDH3A, one of IDH3B and one of IDH3G) requires the assembly and cooperative function of both heterodimers. This is Isocitrate dehydrogenase [NAD] subunit alpha, mitochondrial (IDH3A) from Macaca fascicularis (Crab-eating macaque).